A 233-amino-acid chain; its full sequence is C-type lectin domain family 2 member D5 (233 aa).

The tract at residues 1–52 (MPSSAHLQDPPPLLSRTLTQNEGQTSLRQSSSCGPSAASASESLSGSTESRI) is disordered. At 1 to 76 (MPSSAHLQDP…PLEYPAGLYC (76 aa)) the chain is on the cytoplasmic side. Positions 16–29 (RTLTQNEGQTSLRQ) are enriched in polar residues. Positions 30-50 (SSSCGPSAASASESLSGSTES) are enriched in low complexity. Residues 77 to 97 (CYVVIIVLSVAVVALSVALSV) traverse the membrane as a helical; Signal-anchor for type II membrane protein segment. The Extracellular portion of the chain corresponds to 98 to 233 (KKTAQISTIN…KPNSYTSQCL (136 aa)). Residues 119 to 228 (VGNKCFYFNE…KSICRKPNSY (110 aa)) form the C-type lectin domain. Asparagine 132 carries N-linked (GlcNAc...) asparagine glycosylation.

The protein localises to the cell membrane. Lectin-type cell surface receptor. This is C-type lectin domain family 2 member D5 (Ocil) from Rattus norvegicus (Rat).